The chain runs to 69 residues: Putative membrane protein insertion efficiency factor (69 aa).

This sequence belongs to the UPF0161 family.

It localises to the cell inner membrane. Functionally, could be involved in insertion of integral membrane proteins into the membrane. In Geobacter sulfurreducens (strain ATCC 51573 / DSM 12127 / PCA), this protein is Putative membrane protein insertion efficiency factor.